The following is a 252-amino-acid chain: 5'-nucleotidase SurE (252 aa).

Positions 8, 9, 40, and 93 each coordinate a divalent metal cation.

It belongs to the SurE nucleotidase family. Requires a divalent metal cation as cofactor.

The protein localises to the cytoplasm. The catalysed reaction is a ribonucleoside 5'-phosphate + H2O = a ribonucleoside + phosphate. In terms of biological role, nucleotidase that shows phosphatase activity on nucleoside 5'-monophosphates. In Methylocella silvestris (strain DSM 15510 / CIP 108128 / LMG 27833 / NCIMB 13906 / BL2), this protein is 5'-nucleotidase SurE.